We begin with the raw amino-acid sequence, 293 residues long: Ribosomal RNA small subunit methyltransferase A (293 aa).

Residues Asn29, Leu31, Gly56, Glu77, Asp102, and Asn127 each contribute to the S-adenosyl-L-methionine site.

The protein belongs to the class I-like SAM-binding methyltransferase superfamily. rRNA adenine N(6)-methyltransferase family. RsmA subfamily.

The protein resides in the cytoplasm. The enzyme catalyses adenosine(1518)/adenosine(1519) in 16S rRNA + 4 S-adenosyl-L-methionine = N(6)-dimethyladenosine(1518)/N(6)-dimethyladenosine(1519) in 16S rRNA + 4 S-adenosyl-L-homocysteine + 4 H(+). Specifically dimethylates two adjacent adenosines (A1518 and A1519) in the loop of a conserved hairpin near the 3'-end of 16S rRNA in the 30S particle. May play a critical role in biogenesis of 30S subunits. The sequence is that of Ribosomal RNA small subunit methyltransferase A from Lysinibacillus sphaericus (strain C3-41).